We begin with the raw amino-acid sequence, 258 residues long: Transmembrane O-methyltransferase homolog (258 aa).

S-adenosyl-L-methionine-binding positions include Glu104, 106–107 (GT), Ser112, Glu130, and Ser160.

This sequence belongs to the class I-like SAM-binding methyltransferase superfamily. Cation-dependent O-methyltransferase family. As to quaternary structure, interacts with LHFPL5, PCDH15, TMC1, TMC2 and TMIE. Interacts directly with TMC1. The interaction of TOMT with TMC1 and TMC2 is required for the transportation of TMC1/2 into the stereocilia of hair cells.

The protein localises to the cytoplasm. It localises to the endoplasmic reticulum. The catalysed reaction is a catechol + S-adenosyl-L-methionine = a guaiacol + S-adenosyl-L-homocysteine + H(+). Catalyzes the O-methylation, and thereby the inactivation, of catecholamine neurotransmitters and catechol hormones. Required for auditory function. Component of the cochlear hair cell's mechanotransduction (MET) machinery. Involved in the assembly of the asymmetric tip-link MET complex. Required for transportation of TMC1 and TMC2 proteins into the mechanically sensitive stereocilia of the hair cells. The function in MET is independent of the enzymatic activity. This is Transmembrane O-methyltransferase homolog from Rattus norvegicus (Rat).